The chain runs to 205 residues: Guanylate kinase (205 aa).

The region spanning Gly-3–Leu-181 is the Guanylate kinase-like domain. Position 10–17 (Ala-10–Thr-17) interacts with ATP.

The protein belongs to the guanylate kinase family.

It localises to the cytoplasm. It carries out the reaction GMP + ATP = GDP + ADP. Its function is as follows. Essential for recycling GMP and indirectly, cGMP. In Hydrogenovibrio crunogenus (strain DSM 25203 / XCL-2) (Thiomicrospira crunogena), this protein is Guanylate kinase.